A 266-amino-acid chain; its full sequence is Putative pyruvate, phosphate dikinase regulatory protein (266 aa).

Position 149–156 (149–156 (GVSRTSKT)) interacts with ADP.

It belongs to the pyruvate, phosphate/water dikinase regulatory protein family. PDRP subfamily.

The enzyme catalyses N(tele)-phospho-L-histidyl/L-threonyl-[pyruvate, phosphate dikinase] + ADP = N(tele)-phospho-L-histidyl/O-phospho-L-threonyl-[pyruvate, phosphate dikinase] + AMP + H(+). It carries out the reaction N(tele)-phospho-L-histidyl/O-phospho-L-threonyl-[pyruvate, phosphate dikinase] + phosphate + H(+) = N(tele)-phospho-L-histidyl/L-threonyl-[pyruvate, phosphate dikinase] + diphosphate. Bifunctional serine/threonine kinase and phosphorylase involved in the regulation of the pyruvate, phosphate dikinase (PPDK) by catalyzing its phosphorylation/dephosphorylation. This chain is Putative pyruvate, phosphate dikinase regulatory protein, found in Geobacillus thermodenitrificans (strain NG80-2).